The chain runs to 93 residues: uncharacterized protein (93 aa).

A run of 3 helical transmembrane segments spans residues 15–35 (MAGLRVLSSMIELTAAIVMLV), 48–68 (ILAIVGPLIFIITMTVGIYQI), and 72–92 (LSYAKLILIFTGVVLILAGVH).

It localises to the cell membrane. This is an uncharacterized protein from Bacillus subtilis (strain 168).